The chain runs to 184 residues: Gremlin-1 (184 aa).

The signal sequence occupies residues 1 to 24 (MNRTAYTVGALLLLLGTLLPTAEG). The disordered stretch occupies residues 23 to 77 (EGKKKGSQGAIPPPDKAQHNDSEQTQSPPQPGSRTRGRGQGRGTAMPGEEVLESS). An N-linked (GlcNAc...) asparagine glycan is attached at Asn42. 4 disulfide bridges follow: Cys94–Cys144, Cys108–Cys158, Cys118–Cys176, and Cys122–Cys178. One can recognise a CTCK domain in the interval 94–184 (CKTQPLKQTI…QCRCISIDLD (91 aa)).

It belongs to the DAN family. As to quaternary structure, homodimer; can also form homooligomers. Interacts with BMP2; can form higher oligomers with BMP2. Interacts with SLIT1 and SLIT2 in a glycosylation-dependent manner. Highly expressed in spleen and to a lesser extent in lung, skeletal muscle and kidney. Expressed only in non-transformed cells or primary fibroblasts in culture but not in established transformed or tumor derived cell lines. Broadly expressed in limb bud mesenchyme but restricted to the distal limb bud mesenchyme and concentrated posteriorly. Expressed in ovary especially in granulosa cells of follicles of type 4.

It is found in the secreted. Cytokine that may play an important role during carcinogenesis and metanephric kidney organogenesis, as BMP a antagonist required for early limb outgrowth and patterning in maintaining the FGF4-SHH feedback loop. Down-regulates the BMP4 signaling in a dose-dependent manner. Antagonist of BMP2; inhibits BMP2-mediated differentiation of osteoblasts (in vitro). Acts as inhibitor of monocyte chemotaxis. The chain is Gremlin-1 (Grem1) from Mus musculus (Mouse).